Here is a 94-residue protein sequence, read N- to C-terminus: DNA-directed RNA polymerase subunit omega (94 aa).

It belongs to the RNA polymerase subunit omega family. In terms of assembly, the RNAP catalytic core consists of 2 alpha, 1 beta, 1 beta' and 1 omega subunit. When a sigma factor is associated with the core the holoenzyme is formed, which can initiate transcription.

It carries out the reaction RNA(n) + a ribonucleoside 5'-triphosphate = RNA(n+1) + diphosphate. Promotes RNA polymerase assembly. Latches the N- and C-terminal regions of the beta' subunit thereby facilitating its interaction with the beta and alpha subunits. The protein is DNA-directed RNA polymerase subunit omega of Frankia casuarinae (strain DSM 45818 / CECT 9043 / HFP020203 / CcI3).